A 1091-amino-acid polypeptide reads, in one-letter code: Integrin alpha-6 (1091 aa).

The N-terminal stretch at 1–23 (MAVAGQLCLLYLSAGLLARLGTA) is a signal peptide. Over 24–1011 (FNLDTREDNV…FPSKTVAQYS (988 aa)) the chain is Extracellular. FG-GAP repeat units lie at residues 30–95 (EDNV…GPCT), 101–166 (NDAD…IEDD), 176–229 (DGRL…FFDM), 244–300 (DHDE…KSAH), 301–363 (LLPE…KWSN), 364–419 (VKPI…GIIT), and 420–479 (KPTQ…VTPN). An N-linked (GlcNAc...) asparagine glycan is attached at Asn-78. Cystine bridges form between Cys-86/Cys-94, Cys-131/Cys-154, and Cys-175/Cys-188. Asn-223 and Asn-284 each carry an N-linked (GlcNAc...) asparagine glycan. Ca(2+) is bound by residues Asp-324, Asn-326, Asp-328, and Asp-332. Asn-370 carries an N-linked (GlcNAc...) asparagine glycan. Residues Asp-386, Asn-388, Asp-390, Tyr-392, Asp-394, Asp-441, Asp-443, Asn-445, Tyr-447, and Asp-449 each contribute to the Ca(2+) site. 4 disulfides stabilise this stretch: Cys-489-Cys-496, Cys-502-Cys-562, Cys-626-Cys-632, and Cys-726-Cys-737. N-linked (GlcNAc...) asparagine glycosylation is found at Asn-731, Asn-746, and Asn-927. Disulfide bonds link Cys-881/Cys-928 and Cys-934/Cys-939. An N-linked (GlcNAc...) asparagine glycan is attached at Asn-958. A helical transmembrane segment spans residues 1012-1037 (GVAWWIILLAVLAGILMLALLVFLLW). Residues 1038-1091 (KCGFFKRSRYDDSIPRYHAVRIRKEEREIKDEKHMDNLEKKQWITKWNENESYS) are Cytoplasmic-facing. Cys-1039 carries the S-palmitoyl cysteine; by DHHC3 lipid modification. Positions 1040–1044 (GFFKR) match the GFFKR motif motif. Position 1064 is a phosphoserine (Arg-1064).

The protein belongs to the integrin alpha chain family. Heterodimer of an alpha and a beta subunit. The alpha subunit is composed of a heavy and a light chain linked by a disulfide bond. Alpha-6 associates with either beta-1 (ITGB1) or beta-4 (ITGB4) to form ITGA6:ITGB1 and ITGA6:ITGB4, respectively. ITGA6:ITGB1 is found in a complex with CD9; interaction takes place in oocytes and is involved in sperm-egg fusion. ITGA6:ITGB4 is found in a ternary complex with NRG1 and ERBB3. ITGA6:ITGB4 is found in a ternary complex with IGF1 and IGF1R. ITGA6:ITGB4 interacts with IGF2. Interacts with ADAM9. Interacts with RAB21. Interacts with MDK. ITGA6:ITGB1 interacts with MDK; this interaction mediates MDK-induced neurite outgrowth. Interacts with CD82; this interaction down-regulates ITGA6-mediated cell adhesion. Post-translationally, isoforms containing segment A, but not segment B, are the major targets for PMA-induced phosphorylation. Phosphorylation occurs on 'Ser-1064' of isoform alpha-6X1A. Phosphorylation is not required for the induction of integrin alpha-6A/beta-1 high affinity but may reduce the affinity for ligand. Undergoes PLAU-mediated cleavage at residues Arg-595-596-Arg in a time-dependent manner to produce processed integrin alpha-6 (alpha6p). In terms of processing, palmitoylation by DHHC3 enhances stability and cell surface expression. As to expression, expressed at low levels in normal skin tissue with elevated levels in skin tumors.

Its subcellular location is the cell membrane. Integrin alpha-6/beta-1 (ITGA6:ITGB1) is a receptor for laminin on platelets. Integrin alpha-6/beta-1 (ITGA6:ITGB1) is present in oocytes and is involved in sperm-egg fusion. Integrin alpha-6/beta-4 (ITGA6:ITGB4) is a receptor for laminin in epithelial cells and it plays a critical structural role in the hemidesmosome. ITGA6:ITGB4 binds to NRG1 (via EGF domain) and this binding is essential for NRG1-ERBB signaling. ITGA6:ITGB4 binds to IGF1 and this binding is essential for IGF1 signaling. ITGA6:ITGB4 binds to IGF2 and this binding is essential for IGF2 signaling. The sequence is that of Integrin alpha-6 (Itga6) from Mus musculus (Mouse).